A 1925-amino-acid polypeptide reads, in one-letter code: Cilia- and flagella-associated protein 65 (1925 aa).

Residues phenylalanine 188–isoleucine 208 form a helical membrane-spanning segment. In terms of domain architecture, MSP spans glutamine 877–valine 986. The stretch at serine 1525–phenylalanine 1550 forms a coiled coil. 2 disordered regions span residues lysine 1645–valine 1667 and serine 1736–glutamine 1823. Basic and acidic residues-rich tracts occupy residues proline 1649–proline 1661 and glutamate 1739–glutamate 1762. Acidic residues predominate over residues glycine 1763–glutamate 1804.

The protein belongs to the CFAP65 family. Interacts with CFAP47.

Its subcellular location is the cell projection. It is found in the cilium. It localises to the flagellum membrane. The protein resides in the cytoplasmic vesicle. The protein localises to the secretory vesicle. Its subcellular location is the acrosome membrane. It is found in the cytoplasm. Functionally, plays a role in flagellar formation and sperm motility. The polypeptide is Cilia- and flagella-associated protein 65 (Homo sapiens (Human)).